Here is a 174-residue protein sequence, read N- to C-terminus: Co-chaperone protein HscB homolog (174 aa).

The J domain maps to 2-74 (NYFELFKFPP…IRRAEHMLSL (73 aa)).

It belongs to the HscB family. Interacts with HscA and stimulates its ATPase activity.

Functionally, co-chaperone involved in the maturation of iron-sulfur cluster-containing proteins. Seems to help targeting proteins to be folded toward HscA. This Shewanella baltica (strain OS195) protein is Co-chaperone protein HscB homolog.